We begin with the raw amino-acid sequence, 241 residues long: Hydantoin racemase (241 aa).

It belongs to the HyuE racemase family. In terms of assembly, homotetramer.

The catalysed reaction is a D-5-monosubstituted hydantoin = a L-5-monosubstituted hydantoin. It catalyses the reaction D-5-benzylhydantoin = L-5-benzylhydantoin. It carries out the reaction D-5-isobutylhydantoin = L-5-isobutylhydantoin. Inhibited by Cu(2+), Hg(2+), Pb(2+) and Zn(2+). The activity is twofold lower in the presence of Mn(2+), Co(2+) and Ni(2+). The insignificant effect of the metal chelating agent EDTA on the hydantoin racemase activity would indicate that it is not a metalloenzyme. Its function is as follows. May be involved in the asymmetric conversion of racemic 5-substituted hydantoins to the corresponding L-amino acids. Catalyzes the racemization via enolization of D- and L-5-monosubstituted hydantoins. The protein is Hydantoin racemase of Rhizobium meliloti (Ensifer meliloti).